The chain runs to 874 residues: Alanine--tRNA ligase (874 aa).

Positions 563, 567, 665, and 669 each coordinate Zn(2+).

It belongs to the class-II aminoacyl-tRNA synthetase family. Zn(2+) is required as a cofactor.

The protein resides in the cytoplasm. It catalyses the reaction tRNA(Ala) + L-alanine + ATP = L-alanyl-tRNA(Ala) + AMP + diphosphate. Catalyzes the attachment of alanine to tRNA(Ala) in a two-step reaction: alanine is first activated by ATP to form Ala-AMP and then transferred to the acceptor end of tRNA(Ala). Also edits incorrectly charged Ser-tRNA(Ala) and Gly-tRNA(Ala) via its editing domain. This is Alanine--tRNA ligase from Aeromonas salmonicida (strain A449).